Reading from the N-terminus, the 209-residue chain is Small ribosomal subunit protein uS4 (209 aa).

Residues Met1–Leu13 are compositionally biased toward basic residues. 2 disordered regions span residues Met1–Pro20 and Tyr28–Asp49. The S4 RNA-binding domain occupies Gln95–Gly160.

This sequence belongs to the universal ribosomal protein uS4 family. In terms of assembly, part of the 30S ribosomal subunit. Contacts protein S5. The interaction surface between S4 and S5 is involved in control of translational fidelity.

In terms of biological role, one of the primary rRNA binding proteins, it binds directly to 16S rRNA where it nucleates assembly of the body of the 30S subunit. Its function is as follows. With S5 and S12 plays an important role in translational accuracy. This chain is Small ribosomal subunit protein uS4, found in Clavibacter sepedonicus (Clavibacter michiganensis subsp. sepedonicus).